We begin with the raw amino-acid sequence, 201 residues long: Large ribosomal subunit protein bL25 (201 aa).

Belongs to the bacterial ribosomal protein bL25 family. CTC subfamily. In terms of assembly, part of the 50S ribosomal subunit; part of the 5S rRNA/L5/L18/L25 subcomplex. Contacts the 5S rRNA. Binds to the 5S rRNA independently of L5 and L18.

Functionally, this is one of the proteins that binds to the 5S RNA in the ribosome where it forms part of the central protuberance. The protein is Large ribosomal subunit protein bL25 of Burkholderia multivorans (strain ATCC 17616 / 249).